Here is a 580-residue protein sequence, read N- to C-terminus: Efflux pump dotC (580 aa).

Basic and acidic residues predominate over residues 1–34 (MSEDHTKADNLSEKDPHSPERSDSSSHEDAHARE). The segment at 1-45 (MSEDHTKADNLSEKDPHSPERSDSSSHEDAHAREEEESSDDDGAL) is disordered. A glycan (N-linked (GlcNAc...) asparagine) is linked at N10. Residues 35–44 (EEESSDDDGA) are compositionally biased toward acidic residues. Residues 49–69 (PASLIAIVMIALSLAVFLSAL) form a helical membrane-spanning segment. N-linked (GlcNAc...) asparagine glycosylation occurs at N86. The next 13 membrane-spanning stretches (helical) occupy residues 89–109 (AAYT…TPIW), 127–147 (ALFM…MLIT), 153–173 (GAAG…LFSL), 181–201 (GMIG…GGAF), 209–229 (WCFY…FFFL), 242–262 (FAAI…MFLF), 275–295 (SATV…FGLV), 318–338 (ALLV…YLPL), 348–368 (PILA…SAAA), 380–400 (LIPM…LINF), 409–429 (LIIY…APLV), 444–466 (TATF…QVLY), and 519–539 (SPMW…ILLV). The disordered stretch occupies residues 559 to 580 (KKAEAERKAERQAKDLEKAQKS).

Belongs to the major facilitator superfamily. TCR/Tet family.

The protein localises to the cell membrane. It localises to the vacuole membrane. In terms of biological role, efflux pump; part of the gene cluster that mediates the biosynthesis of dothistromin (DOTH), a polyketide toxin very similar in structure to the aflatoxin precursor, versicolorin B. One function of dotC may be to transport early-stage dothistromin biosynthetic intermediates from the cytoplasm into vacuoles, thereby affecting the rate of dothistromin production. In Dothistroma septosporum (strain NZE10 / CBS 128990) (Red band needle blight fungus), this protein is Efflux pump dotC.